We begin with the raw amino-acid sequence, 354 residues long: Histidinol-phosphate aminotransferase (354 aa).

Residue Lys-208 is modified to N6-(pyridoxal phosphate)lysine.

This sequence belongs to the class-II pyridoxal-phosphate-dependent aminotransferase family. Histidinol-phosphate aminotransferase subfamily. Homodimer. Requires pyridoxal 5'-phosphate as cofactor.

It carries out the reaction L-histidinol phosphate + 2-oxoglutarate = 3-(imidazol-4-yl)-2-oxopropyl phosphate + L-glutamate. It functions in the pathway amino-acid biosynthesis; L-histidine biosynthesis; L-histidine from 5-phospho-alpha-D-ribose 1-diphosphate: step 7/9. This chain is Histidinol-phosphate aminotransferase, found in Aquifex aeolicus (strain VF5).